The sequence spans 393 residues: NAD(P)H-quinone oxidoreductase subunit H, chloroplastic (393 aa).

Belongs to the complex I 49 kDa subunit family. In terms of assembly, NDH is composed of at least 16 different subunits, 5 of which are encoded in the nucleus.

Its subcellular location is the plastid. The protein localises to the chloroplast thylakoid membrane. The catalysed reaction is a plastoquinone + NADH + (n+1) H(+)(in) = a plastoquinol + NAD(+) + n H(+)(out). It catalyses the reaction a plastoquinone + NADPH + (n+1) H(+)(in) = a plastoquinol + NADP(+) + n H(+)(out). NDH shuttles electrons from NAD(P)H:plastoquinone, via FMN and iron-sulfur (Fe-S) centers, to quinones in the photosynthetic chain and possibly in a chloroplast respiratory chain. The immediate electron acceptor for the enzyme in this species is believed to be plastoquinone. Couples the redox reaction to proton translocation, and thus conserves the redox energy in a proton gradient. This Psilotum nudum (Whisk fern) protein is NAD(P)H-quinone oxidoreductase subunit H, chloroplastic.